Consider the following 513-residue polypeptide: Carotenoid isomerooxygenase (513 aa).

4 residues coordinate Fe cation: His-184, His-242, His-312, and His-503.

It belongs to the carotenoid oxygenase family. Fe(2+) serves as cofactor.

The catalysed reaction is all-trans-zeaxanthin + O2 = (3R)-11-cis-3-hydroxyretinal + (3R)-all-trans-3-hydroxyretinal. The protein operates within cofactor metabolism; retinol metabolism. Functionally, catalyzes the oxidative cleavage at the 15,15'-double bond of carotenoids and the simultaneous all-trans to 11-cis isomerization of one cleavage product. Carotenoids like 11-cis retinal can promote visual pigment biogenesis in the dark. Essential for the biosynthesis of the 3-hydroxyretinal chromophore of rhodopsin from zeaxanthin and for proper photoreceptor development. The protein is Carotenoid isomerooxygenase (ninaB) of Galleria mellonella (Greater wax moth).